The chain runs to 304 residues: tRNA dimethylallyltransferase (304 aa).

2–9 (GPTASGKT) lines the ATP pocket. 4–9 (TASGKT) lines the substrate pocket. An interaction with substrate tRNA region spans residues 28–31 (DSAL).

It belongs to the IPP transferase family. As to quaternary structure, monomer. The cofactor is Mg(2+).

The catalysed reaction is adenosine(37) in tRNA + dimethylallyl diphosphate = N(6)-dimethylallyladenosine(37) in tRNA + diphosphate. In terms of biological role, catalyzes the transfer of a dimethylallyl group onto the adenine at position 37 in tRNAs that read codons beginning with uridine, leading to the formation of N6-(dimethylallyl)adenosine (i(6)A). This chain is tRNA dimethylallyltransferase, found in Blochmanniella pennsylvanica (strain BPEN).